The sequence spans 1830 residues: Guanine nucleotide exchange factor SPIKE 1 (1830 aa).

Met1 bears the N-acetylmethionine mark. Positions 285–304 are disordered; it reads NTGESASPSSPLAPSMTASS. Low complexity predominate over residues 289-304; sequence SASPSSPLAPSMTASS. One can recognise a C2 DOCK-type domain in the interval 463–622; that stretch reads FHCLYVYPVA…NIFKLRLRLC (160 aa). Phosphoserine is present on Ser1051. Thr1079 bears the Phosphothreonine mark. Ser1095 is modified (phosphoserine). Residues 1379 to 1828 enclose the DOCKER domain; the sequence is MAFAPVPDLH…LSHYIPAILS (450 aa).

Belongs to the DOCK family. As to quaternary structure, homodimer. Component of SCAR/WAVE and ARP2/3 complexes. Interacts directly with ARAC4/ROP2, ARAC1/ROP3, ARAC5/ROP4, ARAC6/ROP5, ARAC8/ROP10, ARAC9/ROP8, SCAR1, SCAR2, SCAR3, SCAR4, ABI1, ABI2, ABI3 and ABI4. Binds to the inactive GDP-bound form of ARAC3/ROP6. Expressed ubiquitously, in roots and aerial organs.

Its subcellular location is the cytoplasm. The protein localises to the endoplasmic reticulum membrane. It localises to the nucleus. Its function is as follows. Guanine nucleotide exchange factor (GEF) for Rho and Rac. GEF proteins activate small GTPases by exchanging bound GDP for free GTP. Controls actin polymerization via the two heteromeric complexes WAVE and actin-related protein (ARP) 2/3. Involved in cytoskeletal reorganization required for cell shape (e.g. trichome and cotyledon) control and tissue development. Prevents cortical microtubules organization into parallel arrays oriented perpendicular to the axis of cell elongation to limit anisotropic cell growth during petal development, probably by triggering ARAC4/ROP2 and ARAC3/ROP6 activity. Promotes polarized growth and cell-cell adhesion in the leaf epidermis probably by promoting the formation of endoplasmic reticulum (ER) exit site (ERES) and/or trafficking between the ER and Golgi. Triggers ARAC3/ROP6 activation required for auxin-mediated inhibition of PIN2 internalization during gravitropic responses (, PubMed:22683260). This is Guanine nucleotide exchange factor SPIKE 1 from Arabidopsis thaliana (Mouse-ear cress).